A 492-amino-acid chain; its full sequence is Ketol-acid reductoisomerase (NADP(+)) (492 aa).

The region spanning 15-208 is the KARI N-terminal Rossmann domain; the sequence is AQLGKCRFMA…GGHRAGVLEF (194 aa). NADP(+) is bound by residues 45-48, Arg-68, Arg-76, Ser-78, and 108-110; these read CGAQ and DKQ. His-132 is an active-site residue. Gly-158 contributes to the NADP(+) binding site. KARI C-terminal knotted domains follow at residues 209–344 and 345–485; these read SFVA…NAPQ and FEGK…MTDM. The Mg(2+) site is built by Asp-217, Glu-221, Glu-389, and Glu-393. Ser-414 lines the substrate pocket.

This sequence belongs to the ketol-acid reductoisomerase family. Mg(2+) serves as cofactor.

The catalysed reaction is (2R)-2,3-dihydroxy-3-methylbutanoate + NADP(+) = (2S)-2-acetolactate + NADPH + H(+). It carries out the reaction (2R,3R)-2,3-dihydroxy-3-methylpentanoate + NADP(+) = (S)-2-ethyl-2-hydroxy-3-oxobutanoate + NADPH + H(+). The protein operates within amino-acid biosynthesis; L-isoleucine biosynthesis; L-isoleucine from 2-oxobutanoate: step 2/4. It functions in the pathway amino-acid biosynthesis; L-valine biosynthesis; L-valine from pyruvate: step 2/4. In terms of biological role, involved in the biosynthesis of branched-chain amino acids (BCAA). Catalyzes an alkyl-migration followed by a ketol-acid reduction of (S)-2-acetolactate (S2AL) to yield (R)-2,3-dihydroxy-isovalerate. In the isomerase reaction, S2AL is rearranged via a Mg-dependent methyl migration to produce 3-hydroxy-3-methyl-2-ketobutyrate (HMKB). In the reductase reaction, this 2-ketoacid undergoes a metal-dependent reduction by NADPH to yield (R)-2,3-dihydroxy-isovalerate. The polypeptide is Ketol-acid reductoisomerase (NADP(+)) (Yersinia pestis bv. Antiqua (strain Antiqua)).